We begin with the raw amino-acid sequence, 314 residues long: tRNA-cytidine(32) 2-sulfurtransferase (314 aa).

The PP-loop motif signature appears at 49-54 (SGGKDS). [4Fe-4S] cluster-binding residues include Cys124, Cys127, and Cys215.

It belongs to the TtcA family. Homodimer. Mg(2+) serves as cofactor. It depends on [4Fe-4S] cluster as a cofactor.

The protein resides in the cytoplasm. It carries out the reaction cytidine(32) in tRNA + S-sulfanyl-L-cysteinyl-[cysteine desulfurase] + AH2 + ATP = 2-thiocytidine(32) in tRNA + L-cysteinyl-[cysteine desulfurase] + A + AMP + diphosphate + H(+). It participates in tRNA modification. Catalyzes the ATP-dependent 2-thiolation of cytidine in position 32 of tRNA, to form 2-thiocytidine (s(2)C32). The sulfur atoms are provided by the cysteine/cysteine desulfurase (IscS) system. This Histophilus somni (strain 2336) (Haemophilus somnus) protein is tRNA-cytidine(32) 2-sulfurtransferase.